The sequence spans 617 residues: BPI fold-containing family B member 4 (617 aa).

An N-terminal signal peptide occupies residues 1–17 (MWTAWCVAALSVAAVCG). Positions 124 to 149 (RPSDSAYHRGPGRYRSAADPSSAGRL) are disordered. An N-linked (GlcNAc...) asparagine glycan is attached at Asn275. An intrachain disulfide couples Cys297 to Cys334.

This sequence belongs to the BPI/LBP/Plunc superfamily. BPI/LBP family. In terms of tissue distribution, highly expressed in olfactory mucosa but undetectable in thymus, kidney, lung, brain, spleen and liver.

It is found in the secreted. The protein localises to the cytoplasm. Functionally, may have the capacity to recognize and bind specific classes of odorants. May act as a carrier molecule, transporting odorants across the mucus layer to access receptor sites. May serve as a primary defense mechanism by recognizing and removing potentially harmful odorants or pathogenic microorganisms from the mucosa or clearing excess odorant from mucus to enable new odorant stimuli to be received. The chain is BPI fold-containing family B member 4 (Bpifb4) from Rattus norvegicus (Rat).